Here is a 2063-residue protein sequence, read N- to C-terminus: Rho guanine nucleotide exchange factor 17 (2063 aa).

Disordered regions lie at residues 22–365 (WSGG…MSDS), 380–466 (YLAS…SNPD), 485–581 (LRVR…AEED), and 602–958 (IQRM…RHVR). Residues 65 to 76 (PLAAPAQPRPLR) are compositionally biased toward low complexity. Residues 87-96 (RRFDAPRLDD) show a composition bias toward basic and acidic residues. The span at 108–122 (PAAAEEAAEGPARGA) shows a compositional bias: low complexity. Phosphoserine occurs at positions 142 and 152. The segment covering 225 to 250 (AGARASCSSSSIAASYPVSRSRAASS) has biased composition (low complexity). The residue at position 310 (serine 310) is a Phosphoserine. A compositionally biased stretch (polar residues) spans 313–323 (LNLSSMNSAGV). Phosphoserine is present on residues serine 326, serine 332, serine 383, serine 387, serine 395, serine 410, and serine 420. A compositionally biased stretch (polar residues) spans 388 to 397 (RGSSRYSSTE). Residues 445–456 (ALRDGGFEPEKS) show a composition bias toward basic and acidic residues. Serine 461 and serine 546 each carry phosphoserine. Residues 562 to 573 (SALKSSSSELLL) show a composition bias toward low complexity. Serine 619 carries the phosphoserine modification. Polar residues predominate over residues 671–680 (LSSSSAQTNH). Residue serine 696 is modified to Phosphoserine. Residues threonine 699 and threonine 702 each carry the phosphothreonine modification. Residue serine 735 is modified to Phosphoserine. A compositionally biased stretch (polar residues) spans 754–765 (SVDSNLLGSLSP). Residues 827 to 836 (SLSDPSRRGE) show a composition bias toward basic and acidic residues. Serine 914 is modified (phosphoserine). Residues 917-928 (LIRRGSKKRPAR) show a composition bias toward basic residues. A compositionally biased stretch (basic and acidic residues) spans 930-939 (SHQELRRDEG). Residues serine 961 and serine 1002 each carry the phosphoserine modification. Residues 1034-1060 (APPSAEAKPPEAARPADEPTPASKCCS) form a disordered region. Over residues 1041-1050 (KPPEAARPAD) the composition is skewed to basic and acidic residues. In terms of domain architecture, DH spans 1066-1254 (MRKHVAMTLL…KQVAERINKG (189 aa)). Serine 1331 carries the phosphoserine modification. 4 disordered regions span residues 1564–1584 (HREPPPSLRSPPETAPEPAGP), 1616–1719 (GLEM…SSHG), 1991–2020 (TPPPPPDTGPEKLPSLEHRDSPWHRGPAPA), and 2036–2055 (FRLSSGGGSSSETVGRDDST). Residues 1568 to 1582 (PPSLRSPPETAPEPA) are compositionally biased toward pro residues. Positions 1644–1680 (SPSPSGTLQSQASRSTISSSFGNEETPSSKEATAETT) are enriched in low complexity. Residues 2004 to 2013 (PSLEHRDSPW) show a composition bias toward basic and acidic residues.

Highly expressed in the heart.

Acts as a guanine nucleotide exchange factor (GEF) for RhoA GTPases. This is Rho guanine nucleotide exchange factor 17 (ARHGEF17) from Homo sapiens (Human).